The following is a 246-amino-acid chain: Exosome complex component Rrp41 (246 aa).

This sequence belongs to the RNase PH family. Rrp41 subfamily. Component of the archaeal exosome complex. Forms a hexameric ring-like arrangement composed of 3 Rrp41-Rrp42 heterodimers. The hexameric ring associates with a trimer of Rrp4 and/or Csl4 subunits.

It is found in the cytoplasm. Functionally, catalytic component of the exosome, which is a complex involved in RNA degradation. Has 3'-&gt;5' exoribonuclease activity. Can also synthesize heteromeric RNA-tails. In Aeropyrum pernix (strain ATCC 700893 / DSM 11879 / JCM 9820 / NBRC 100138 / K1), this protein is Exosome complex component Rrp41.